Here is a 240-residue protein sequence, read N- to C-terminus: MSEITKITAQKRRGRYNIFIDGTYAFPVSETTLVDYRLAKGMVLTAETIAQIKSSEVTAMGLEIGLTYISHQSRTSKEVSDRLAKEDLPADVIQKVLTRLTDLGFLDDADYAHRYIEEHLKMGELGPRTLQHKLQQKGLKPDLLANELAAIPTTAWLDAAVRAGQKNLRHHQHRAYKDQLQRLRVALMQKGFDDTTIQTAIATIDPQPDPEAESDLLKLEAAKQWRLKAKYGDRERKQKV.

The protein belongs to the RecX family.

The protein resides in the cytoplasm. Functionally, modulates RecA activity. The polypeptide is Regulatory protein RecX (Lacticaseibacillus paracasei (strain ATCC 334 / BCRC 17002 / CCUG 31169 / CIP 107868 / KCTC 3260 / NRRL B-441) (Lactobacillus paracasei)).